We begin with the raw amino-acid sequence, 362 residues long: Cobalt-precorrin-5B C(1)-methyltransferase (362 aa).

Belongs to the CbiD family.

It catalyses the reaction Co-precorrin-5B + S-adenosyl-L-methionine = Co-precorrin-6A + S-adenosyl-L-homocysteine. It participates in cofactor biosynthesis; adenosylcobalamin biosynthesis; cob(II)yrinate a,c-diamide from sirohydrochlorin (anaerobic route): step 6/10. Functionally, catalyzes the methylation of C-1 in cobalt-precorrin-5B to form cobalt-precorrin-6A. The chain is Cobalt-precorrin-5B C(1)-methyltransferase from Burkholderia ambifaria (strain MC40-6).